Reading from the N-terminus, the 854-residue chain is Envelope glycoprotein B (854 aa).

The N-terminal stretch at 1-30 (MSKNWFPLLCASVLVVYVSIASSSTGTASG) is a signal peptide. Residues 31–723 (AVTPTSPTEN…EGVVGFIKNP (693 aa)) lie on the Virion surface side of the membrane. N-linked (GlcNAc...) asparagine; by host glycosylation is found at Asn40, Asn48, and Asn60. 5 cysteine pairs are disulfide-bonded: Cys69–Cys524, Cys86–Cys480, Cys160–Cys225, Cys317–Cys364, and Cys546–Cys583. Residues 127-133 (SYSFIRE) form an involved in fusion and/or binding to host membrane region. Asn183 carries an N-linked (GlcNAc...) asparagine; by host glycan. The involved in fusion and/or binding to host membrane stretch occupies residues 212-219 (GSTWLYTT). Residues Asn256, Asn275, Asn314, Asn356, Asn378, Asn382, Asn390, Asn423, Asn426, Asn442, Asn558, and Asn595 are each glycosylated (N-linked (GlcNAc...) asparagine; by host). Hydrophobic membrane proximal region stretches follow at residues 669–721 (VEGK…GFIK) and 700–720 (VAIGAVGGAVASFVEGVVGFI). A helical membrane pass occupies residues 724–744 (FGSFTVILFLLAVLGVIYLIY). Residues 745-854 (MRQKRAYEKP…YQKIQNEYEV (110 aa)) lie on the Intravirion side of the membrane.

The protein belongs to the herpesviridae glycoprotein B family. Homotrimer; disulfide-linked. Binds to heparan sulfate proteoglycans. Interacts with gH/gL heterodimer. A proteolytic cleavage by host furin generates two subunits that remain linked by disulfide bonds.

The protein localises to the virion membrane. Its subcellular location is the host cell membrane. It localises to the host endosome membrane. It is found in the host Golgi apparatus membrane. In terms of biological role, envelope glycoprotein that forms spikes at the surface of virion envelope. Essential for the initial attachment to heparan sulfate moieties of the host cell surface proteoglycans. Involved in fusion of viral and cellular membranes leading to virus entry into the host cell. Following initial binding to its host receptors, membrane fusion is mediated by the fusion machinery composed at least of gB and the heterodimer gH/gL. May be involved in the fusion between the virion envelope and the outer nuclear membrane during virion egress. This is Envelope glycoprotein B from Macaca mulatta (Rhesus macaque).